Here is a 179-residue protein sequence, read N- to C-terminus: ATP synthase subunit b, chloroplastic (179 aa).

The chain crosses the membrane as a helical span at residues 35 to 51 (IVILGGGIFKLGSTALS).

The protein belongs to the ATPase B chain family. F-type ATPases have 2 components, F(1) - the catalytic core - and F(0) - the membrane proton channel. F(1) has five subunits: alpha(3), beta(3), gamma(1), delta(1), epsilon(1). F(0) has four main subunits: a(1), b(1), b'(1) and c(10-14). The alpha and beta chains form an alternating ring which encloses part of the gamma chain. F(1) is attached to F(0) by a central stalk formed by the gamma and epsilon chains, while a peripheral stalk is formed by the delta, b and b' chains.

It localises to the plastid. The protein localises to the chloroplast thylakoid membrane. In terms of biological role, f(1)F(0) ATP synthase produces ATP from ADP in the presence of a proton or sodium gradient. F-type ATPases consist of two structural domains, F(1) containing the extramembraneous catalytic core and F(0) containing the membrane proton channel, linked together by a central stalk and a peripheral stalk. During catalysis, ATP synthesis in the catalytic domain of F(1) is coupled via a rotary mechanism of the central stalk subunits to proton translocation. Component of the F(0) channel, it forms part of the peripheral stalk, linking F(1) to F(0). The polypeptide is ATP synthase subunit b, chloroplastic (Emiliania huxleyi (Coccolithophore)).